The following is a 375-amino-acid chain: Chlorophyll a/b light-harvesting protein PcbC (375 aa).

The next 6 helical transmembrane spans lie at 40–60 (LLGA…SITV), 102–122 (YFVI…GGLF), 151–171 (LSLI…AFVA), 225–245 (IIGG…WHIL), 262–282 (AILS…GFFV), and 300–320 (GAAA…VWHA). Positions 352 to 375 (ARTFIGRGKPQPEPPKKKGLFGRG) are disordered.

This sequence belongs to the PsbB/PsbC family. IsiA/Pcb subfamily. In terms of assembly, the antenna complex consists of chlorophylls (a and b) and chlorophyll a/b binding proteins. Chlorophyll a is required as a cofactor. It depends on chlorophyll b as a cofactor.

The protein localises to the cellular thylakoid membrane. In terms of biological role, the antenna complex functions as a light receptor, it captures and delivers excitation energy to photosystems II and I. The Prochlorales pcb genes are not related to higher plant LHCs. This chain is Chlorophyll a/b light-harvesting protein PcbC (pcbC), found in Prochlorothrix hollandica.